A 20-amino-acid polypeptide reads, in one-letter code: Pregnancy-associated glycoprotein 73B (20 aa).

This sequence belongs to the peptidase A1 family. In terms of processing, N-glycosylated. Expressed in chorionic epithelium (trophectoderm).

It is found in the secreted. It localises to the extracellular space. The polypeptide is Pregnancy-associated glycoprotein 73B (Bubalus bubalis (Domestic water buffalo)).